Here is a 118-residue protein sequence, read N- to C-terminus: Large ribosomal subunit protein uL18 (118 aa).

The protein belongs to the universal ribosomal protein uL18 family. As to quaternary structure, part of the 50S ribosomal subunit; part of the 5S rRNA/L5/L18/L25 subcomplex. Contacts the 5S and 23S rRNAs.

Functionally, this is one of the proteins that bind and probably mediate the attachment of the 5S RNA into the large ribosomal subunit, where it forms part of the central protuberance. This Helicobacter pylori (strain P12) protein is Large ribosomal subunit protein uL18.